A 348-amino-acid chain; its full sequence is MKKSLIALTLAALPVAATADVTLYGAIKAGVQTYRSVEHTDGKVSKVETGSEIADFGSKIGFKGQEDLGNGLKAVWQLEQGASVAGTNTGWGNKQSFVGLKGGFGTIRAGSLNSPLKNTDANVNAWESGKFTGNVLEISGMAKREHRYLSVRYDSPEFAGFSGSVQYAPKDNSGSNGESYHVGLNYQNSGFFAQYAGLFQRYGEGTKKIEYEHQVYSIPSLFVEKLQVHRLVGGYDNNALYVSVAAQQQDAKLYGARRANSHNSQTEVAATAAYRFGNVTPRVSYAHGFKGTVDSADHDNTYDQVVVGAEYDFSKRTSALVSAGWLQEGKGADKIVSTASAVVLRHKF.

The first 19 residues, 1 to 19 (MKKSLIALTLAALPVAATA), serve as a signal peptide directing secretion.

This sequence belongs to the Gram-negative porin family. In terms of assembly, homotrimer.

The protein resides in the cell outer membrane. Functionally, serves as a slightly cation selective porin. Major antigen on the gonococcal cell surface and it may have pathogenic properties in addition to its porin activity. In Neisseria gonorrhoeae, this protein is Major outer membrane protein P.IB (porB).